The sequence spans 216 residues: MNTLRFPAGLYGVTPEWDDTSRLLAAVRDAAAGGMRALQLRRKHLSREQRLLQARALAPLCRELGVTFIVNDDWRTALEAGADGAHIGRDDATLAEVRAAAPGLLLGVSCYADLNRARELLAQGADYIAFGAVFPSPTKPQAAHAPLALLGEAAAQVRACGEPRPAVVAIGGITPANAGLVAAAGADSIAVITGLFEAPDIRAAAQACAAPFPLTD.

4-amino-2-methyl-5-(diphosphooxymethyl)pyrimidine is bound by residues 39-43 (QLRRK) and Asn71. Positions 72 and 91 each coordinate Mg(2+). Residue Ser109 participates in 4-amino-2-methyl-5-(diphosphooxymethyl)pyrimidine binding. 136-138 (SPT) is a binding site for 2-[(2R,5Z)-2-carboxy-4-methylthiazol-5(2H)-ylidene]ethyl phosphate. Residue Lys139 coordinates 4-amino-2-methyl-5-(diphosphooxymethyl)pyrimidine. Residues Gly172 and 192 to 193 (IT) each bind 2-[(2R,5Z)-2-carboxy-4-methylthiazol-5(2H)-ylidene]ethyl phosphate.

This sequence belongs to the thiamine-phosphate synthase family. Mg(2+) is required as a cofactor.

The catalysed reaction is 2-[(2R,5Z)-2-carboxy-4-methylthiazol-5(2H)-ylidene]ethyl phosphate + 4-amino-2-methyl-5-(diphosphooxymethyl)pyrimidine + 2 H(+) = thiamine phosphate + CO2 + diphosphate. It carries out the reaction 2-(2-carboxy-4-methylthiazol-5-yl)ethyl phosphate + 4-amino-2-methyl-5-(diphosphooxymethyl)pyrimidine + 2 H(+) = thiamine phosphate + CO2 + diphosphate. It catalyses the reaction 4-methyl-5-(2-phosphooxyethyl)-thiazole + 4-amino-2-methyl-5-(diphosphooxymethyl)pyrimidine + H(+) = thiamine phosphate + diphosphate. The protein operates within cofactor biosynthesis; thiamine diphosphate biosynthesis; thiamine phosphate from 4-amino-2-methyl-5-diphosphomethylpyrimidine and 4-methyl-5-(2-phosphoethyl)-thiazole: step 1/1. In terms of biological role, condenses 4-methyl-5-(beta-hydroxyethyl)thiazole monophosphate (THZ-P) and 2-methyl-4-amino-5-hydroxymethyl pyrimidine pyrophosphate (HMP-PP) to form thiamine monophosphate (TMP). In Bordetella avium (strain 197N), this protein is Thiamine-phosphate synthase.